Reading from the N-terminus, the 90-residue chain is Probable Fe(2+)-trafficking protein (90 aa).

The protein belongs to the Fe(2+)-trafficking protein family.

Functionally, could be a mediator in iron transactions between iron acquisition and iron-requiring processes, such as synthesis and/or repair of Fe-S clusters in biosynthetic enzymes. In Halorhodospira halophila (strain DSM 244 / SL1) (Ectothiorhodospira halophila (strain DSM 244 / SL1)), this protein is Probable Fe(2+)-trafficking protein.